We begin with the raw amino-acid sequence, 860 residues long: Leucine--tRNA ligase (860 aa).

A 'HIGH' region motif is present at residues 42–52; that stretch reads PYPSGRLHMGH. Residues 619 to 623 carry the 'KMSKS' region motif; it reads KMSKS. K622 contributes to the ATP binding site.

This sequence belongs to the class-I aminoacyl-tRNA synthetase family.

Its subcellular location is the cytoplasm. It catalyses the reaction tRNA(Leu) + L-leucine + ATP = L-leucyl-tRNA(Leu) + AMP + diphosphate. In Salmonella paratyphi A (strain ATCC 9150 / SARB42), this protein is Leucine--tRNA ligase.